The chain runs to 57 residues: DELTA-limacoditoxin(2)-Dv11 (57 aa).

The first 24 residues, 1-24, serve as a signal peptide directing secretion; it reads MKFAKTFLLLFVVLLLLSIVMAEP.

It belongs to the limacoditoxin-2 (cecropin-like) family. In terms of tissue distribution, expressed by the venom secretory cell of the spine. The spine is a cuticular structure containing a single large nucleated venom-secreting cell at its base. It is an independent unit capable of producing, storing and injecting venom. On the back of D.vulnerans caterpillars, spines are grouped together by 50 to 100 to form scoli, of which there are eight in D.vulnerans.

The protein resides in the secreted. Peptide that induces pain in mammals and has insecticidal, antibacterial and antiparasitic activities. Induces partially reversible paralysis in D.melanogaster when tested at high doses. Shows a moderate antiparasitic activity against the major pathogenic nematode of ruminants (H.contortus, EC(50)=30.5 uM). Has potent or moderate antibacterial activities against A.baumannii (MIC&lt;0.25 ug/mL) and S.aureus (MIC=16 ug/mL). Has no activity on the other bacteria tested, nor on the fungus C.albicans. Strongly induces the increase of intracellular calcium in mice DRG neurons, which is a proxy for neuronal activation that would occur during nociception. This increase is due to influx of extracellular calcium, suggesting that the peptide forms pore or channel in neuronal cell membranes. In addition, intraplantar injection in mice provokes nocifensive behavior, suggesting a pain-inducing activity. This chain is DELTA-limacoditoxin(2)-Dv11, found in Doratifera vulnerans (Mottled cup moth).